Consider the following 238-residue polypeptide: Purine nucleoside phosphorylase DeoD-type (238 aa).

Histidine 4 is a binding site for a purine D-ribonucleoside. Phosphate-binding positions include glycine 20, arginine 24, arginine 43, and 87–90 (RIGS). A purine D-ribonucleoside-binding positions include 181–183 (EME) and 205–206 (SD). Aspartate 206 functions as the Proton donor in the catalytic mechanism.

It belongs to the PNP/UDP phosphorylase family. Homohexamer; trimer of homodimers.

The catalysed reaction is a purine D-ribonucleoside + phosphate = a purine nucleobase + alpha-D-ribose 1-phosphate. It carries out the reaction a purine 2'-deoxy-D-ribonucleoside + phosphate = a purine nucleobase + 2-deoxy-alpha-D-ribose 1-phosphate. Its function is as follows. Catalyzes the reversible phosphorolytic breakdown of the N-glycosidic bond in the beta-(deoxy)ribonucleoside molecules, with the formation of the corresponding free purine bases and pentose-1-phosphate. This Mycoplasma genitalium (strain ATCC 33530 / DSM 19775 / NCTC 10195 / G37) (Mycoplasmoides genitalium) protein is Purine nucleoside phosphorylase DeoD-type.